The chain runs to 660 residues: DNA mismatch repair protein MutL (660 aa).

It belongs to the DNA mismatch repair MutL/HexB family.

Its function is as follows. This protein is involved in the repair of mismatches in DNA. It is required for dam-dependent methyl-directed DNA mismatch repair. May act as a 'molecular matchmaker', a protein that promotes the formation of a stable complex between two or more DNA-binding proteins in an ATP-dependent manner without itself being part of a final effector complex. This is DNA mismatch repair protein MutL from Streptococcus equi subsp. zooepidemicus (strain MGCS10565).